A 345-amino-acid chain; its full sequence is L-threonine 3-dehydrogenase (345 aa).

Zn(2+) is bound at residue Cys-39. Catalysis depends on charge relay system residues Thr-41 and His-44. Positions 64, 65, 94, 97, 100, and 108 each coordinate Zn(2+). Residues Ile-176, Asp-196, Arg-201, 263–265 (LGI), and 287–288 (VY) contribute to the NAD(+) site.

Belongs to the zinc-containing alcohol dehydrogenase family. As to quaternary structure, homotetramer. Zn(2+) is required as a cofactor.

The protein resides in the cytoplasm. The catalysed reaction is L-threonine + NAD(+) = (2S)-2-amino-3-oxobutanoate + NADH + H(+). Its pathway is amino-acid degradation; L-threonine degradation via oxydo-reductase pathway; glycine from L-threonine: step 1/2. Functionally, catalyzes the NAD(+)-dependent oxidation of L-threonine to 2-amino-3-ketobutyrate. The chain is L-threonine 3-dehydrogenase from Anaeromyxobacter dehalogenans (strain 2CP-1 / ATCC BAA-258).